We begin with the raw amino-acid sequence, 354 residues long: S-adenosylmethionine:tRNA ribosyltransferase-isomerase (354 aa).

The protein belongs to the QueA family. As to quaternary structure, monomer.

The protein localises to the cytoplasm. The catalysed reaction is 7-aminomethyl-7-carbaguanosine(34) in tRNA + S-adenosyl-L-methionine = epoxyqueuosine(34) in tRNA + adenine + L-methionine + 2 H(+). The protein operates within tRNA modification; tRNA-queuosine biosynthesis. Its function is as follows. Transfers and isomerizes the ribose moiety from AdoMet to the 7-aminomethyl group of 7-deazaguanine (preQ1-tRNA) to give epoxyqueuosine (oQ-tRNA). This is S-adenosylmethionine:tRNA ribosyltransferase-isomerase from Salmonella paratyphi C (strain RKS4594).